Reading from the N-terminus, the 224-residue chain is Biosynthetic peptidoglycan transglycosylase (224 aa).

Residues 9-29 (VLILVSFVLLIQLWIFCSLAW) form a helical membrane-spanning segment.

The protein belongs to the glycosyltransferase 51 family.

It is found in the cell inner membrane. It carries out the reaction [GlcNAc-(1-&gt;4)-Mur2Ac(oyl-L-Ala-gamma-D-Glu-L-Lys-D-Ala-D-Ala)](n)-di-trans,octa-cis-undecaprenyl diphosphate + beta-D-GlcNAc-(1-&gt;4)-Mur2Ac(oyl-L-Ala-gamma-D-Glu-L-Lys-D-Ala-D-Ala)-di-trans,octa-cis-undecaprenyl diphosphate = [GlcNAc-(1-&gt;4)-Mur2Ac(oyl-L-Ala-gamma-D-Glu-L-Lys-D-Ala-D-Ala)](n+1)-di-trans,octa-cis-undecaprenyl diphosphate + di-trans,octa-cis-undecaprenyl diphosphate + H(+). The protein operates within cell wall biogenesis; peptidoglycan biosynthesis. Functionally, peptidoglycan polymerase that catalyzes glycan chain elongation from lipid-linked precursors. The polypeptide is Biosynthetic peptidoglycan transglycosylase (Acinetobacter baylyi (strain ATCC 33305 / BD413 / ADP1)).